The following is a 51-amino-acid chain: U-Asilidin(1)-Eru1a (51 aa).

An N-terminal signal peptide occupies residues 1-23; it reads MANYIDVLSFLAIICATVLATLA. Intrachain disulfides connect C26/C40, C33/C44, and C39/C49.

The protein belongs to the asilidin-1 family. As to expression, expressed by the venom gland. The most highly expressed peptides U-Asilidin1-Mar1a is around 3000 times higher expressed in the venom thoracic glands compared to its body tissues.

It is found in the secreted. Its function is as follows. Induces neurotoxic effect on honeybees, including slow movements, disorientation and paralysis. Since it provokes similar symptoms than omega-atracotoxin, it is probable that it acts in the same way by inhibiting voltage-gated calcium channels. The sequence is that of U-Asilidin(1)-Eru1a from Eutolmus rufibarbis (Golden-tabbed robberfly).